A 473-amino-acid polypeptide reads, in one-letter code: Proline transporter 1 (473 aa).

The segment covering 1–11 (MDQHQLDEENQ) has biased composition (basic and acidic residues). A disordered region spans residues 1-31 (MDQHQLDEENQRAALFHSSAPSSSLGADGEE). The next 11 membrane-spanning stretches (helical) occupy residues 65–85 (PWYQ…VLGY), 88–108 (SIMV…AAAI), 145–165 (LTWA…IILA), 188–208 (IALS…LSAL), 210–230 (IWLG…FVMS), 252–272 (IFTT…GMLP), 290–310 (LWFQ…MGYW), 333–353 (VANL…ASPM), 378–398 (VGVR…LPFL), 401–421 (FMSL…ANHM), and 437–457 (WHWL…VAAV).

The protein belongs to the amino acid/polyamine transporter 2 family. Amino acid/auxin permease (AAAP) (TC 2.A.18.3) subfamily. Expressed in roots, leaf blades and sheaths, stems and young panicle.

It is found in the cell membrane. Proline transporter that mediates proline transport across the plasma membrane when expressed in a heterologous system (Xenopus oocytes). The protein is Proline transporter 1 (PROT1) of Oryza sativa subsp. japonica (Rice).